A 456-amino-acid polypeptide reads, in one-letter code: UDP-N-acetylmuramate--L-alanine ligase (456 aa).

Position 112–118 (112–118) interacts with ATP; that stretch reads GAHGKTT.

The protein belongs to the MurCDEF family.

The protein localises to the cytoplasm. The catalysed reaction is UDP-N-acetyl-alpha-D-muramate + L-alanine + ATP = UDP-N-acetyl-alpha-D-muramoyl-L-alanine + ADP + phosphate + H(+). It functions in the pathway cell wall biogenesis; peptidoglycan biosynthesis. Functionally, cell wall formation. In Desulfatibacillum aliphaticivorans, this protein is UDP-N-acetylmuramate--L-alanine ligase.